The sequence spans 86 residues: UPF0297 protein LCABL_08470 (86 aa).

Belongs to the UPF0297 family.

The chain is UPF0297 protein LCABL_08470 from Lacticaseibacillus casei (strain BL23) (Lactobacillus casei).